The sequence spans 98 residues: Large ribosomal subunit protein eL14 (98 aa).

Belongs to the eukaryotic ribosomal protein eL14 family.

This chain is Large ribosomal subunit protein eL14, found in Hyperthermus butylicus (strain DSM 5456 / JCM 9403 / PLM1-5).